Consider the following 263-residue polypeptide: Shikimate dehydrogenase (NADP(+)) (263 aa).

Shikimate is bound by residues 16–18 (SKS) and T65. K69 functions as the Proton acceptor in the catalytic mechanism. The shikimate site is built by N90 and D105. NADP(+) contacts are provided by residues 125–129 (GSGGS) and L208. Y210 provides a ligand contact to shikimate. G230 contacts NADP(+).

It belongs to the shikimate dehydrogenase family. In terms of assembly, homodimer.

The enzyme catalyses shikimate + NADP(+) = 3-dehydroshikimate + NADPH + H(+). The protein operates within metabolic intermediate biosynthesis; chorismate biosynthesis; chorismate from D-erythrose 4-phosphate and phosphoenolpyruvate: step 4/7. Functionally, involved in the biosynthesis of the chorismate, which leads to the biosynthesis of aromatic amino acids. Catalyzes the reversible NADPH linked reduction of 3-dehydroshikimate (DHSA) to yield shikimate (SA). This Helicobacter acinonychis (strain Sheeba) protein is Shikimate dehydrogenase (NADP(+)).